Reading from the N-terminus, the 149-residue chain is Lymphocyte antigen 6 complex locus protein G5c (149 aa).

A signal peptide spans 1–41 (MLFMAGPAASWSLRPLGLHGVPQALCAVLLTVLVMKTLVLG). A UPAR/Ly6 domain is found at 59–149 (LNCYRCLLET…NPDNRKNSMH (91 aa)). 5 disulfides stabilise this stretch: Cys61–Cys88, Cys64–Cys73, Cys80–Cys106, Cys115–Cys132, and Cys133–Cys138. A glycan (N-linked (GlcNAc...) asparagine) is linked at Asn95.

Forms oligomers. N-glycosylated. As to expression, detected in adult brain.

It localises to the secreted. May have a role in hematopoietic cell differentiation. The polypeptide is Lymphocyte antigen 6 complex locus protein G5c (Ly6g5c) (Mus musculus (Mouse)).